The primary structure comprises 446 residues: Histidine--tRNA ligase (446 aa).

This sequence belongs to the class-II aminoacyl-tRNA synthetase family. Homodimer.

It localises to the cytoplasm. The enzyme catalyses tRNA(His) + L-histidine + ATP = L-histidyl-tRNA(His) + AMP + diphosphate + H(+). This is Histidine--tRNA ligase from Burkholderia ambifaria (strain MC40-6).